Here is a 264-residue protein sequence, read N- to C-terminus: Phosphonates import ATP-binding protein PhnC (264 aa).

The ABC transporter domain maps to 3 to 246; that stretch reads IRLQEAGLRH…MLDALYANEQ (244 aa). 35–42 is an ATP binding site; that stretch reads GPSGAGKS.

This sequence belongs to the ABC transporter superfamily. Phosphonates importer (TC 3.A.1.9.1) family. As to quaternary structure, the complex is composed of two ATP-binding proteins (PhnC), two transmembrane proteins (PhnE) and a solute-binding protein (PhnD).

It localises to the cell inner membrane. The catalysed reaction is phosphonate(out) + ATP + H2O = phosphonate(in) + ADP + phosphate + H(+). In terms of biological role, part of the ABC transporter complex PhnCDE involved in phosphonates import. Responsible for energy coupling to the transport system. The chain is Phosphonates import ATP-binding protein PhnC from Pseudomonas entomophila (strain L48).